The following is a 304-amino-acid chain: MERANHSVVSEFILLGLSKSQNLQILFFLGFSVVFVGIVLGNLLILVTVTFDSLLHTPMYFLLSNLSCIDMILASFATPKMIVDFLRERKTISWWGCYSQMFFMHLLGGSEMMLLVAMAIDRYVAICKPLHYMTIMSPRVLTGLLLSSYAVGFVHSSSQMAFMLTLPFCGPNVIDSFFCDLPLVIKLACKDTYILQLLVIADSGLLSLVCFLLLLVSYGVIIFSVRYRAASRSSKAFSTLSAHITVVTLFFAPCVFIYVWPFSRYSVDKILSVFYTIFTPLLNPIIYTLRNQEVKAAIKKRLCI.

The Extracellular portion of the chain corresponds to 1-25; the sequence is MERANHSVVSEFILLGLSKSQNLQI. Asparagine 5 is a glycosylation site (N-linked (GlcNAc...) asparagine). The chain crosses the membrane as a helical span at residues 26-49; sequence LFFLGFSVVFVGIVLGNLLILVTV. Over 50 to 57 the chain is Cytoplasmic; sequence TFDSLLHT. The chain crosses the membrane as a helical span at residues 58-79; that stretch reads PMYFLLSNLSCIDMILASFATP. Over 80 to 100 the chain is Extracellular; it reads KMIVDFLRERKTISWWGCYSQ. A disulfide bridge connects residues cysteine 97 and cysteine 189. Residues 101 to 120 form a helical membrane-spanning segment; sequence MFFMHLLGGSEMMLLVAMAI. The Cytoplasmic portion of the chain corresponds to 121–139; that stretch reads DRYVAICKPLHYMTIMSPR. The helical transmembrane segment at 140 to 158 threads the bilayer; that stretch reads VLTGLLLSSYAVGFVHSSS. At 159-195 the chain is on the extracellular side; sequence QMAFMLTLPFCGPNVIDSFFCDLPLVIKLACKDTYIL. Residues 196–219 traverse the membrane as a helical segment; it reads QLLVIADSGLLSLVCFLLLLVSYG. At 220–235 the chain is on the cytoplasmic side; that stretch reads VIIFSVRYRAASRSSK. The helical transmembrane segment at 236-258 threads the bilayer; it reads AFSTLSAHITVVTLFFAPCVFIY. The Extracellular portion of the chain corresponds to 259–269; it reads VWPFSRYSVDK. A helical transmembrane segment spans residues 270 to 289; it reads ILSVFYTIFTPLLNPIIYTL. Residues 290-304 are Cytoplasmic-facing; it reads RNQEVKAAIKKRLCI.

This sequence belongs to the G-protein coupled receptor 1 family.

The protein resides in the cell membrane. Odorant receptor. The sequence is that of Olfactory receptor 4K13 (OR4K13) from Homo sapiens (Human).